A 360-amino-acid polypeptide reads, in one-letter code: Transcription elongation factor, mitochondrial (360 aa).

A mitochondrion-targeting transit peptide spans 1–35 (MSGSVLFTAGERWRCFLTPSRSSLYWALHNFCCRK).

The protein belongs to the TEFM family. As to quaternary structure, interacts with POLRMT.

It localises to the mitochondrion matrix. Its subcellular location is the mitochondrion nucleoid. Functionally, transcription elongation factor which increases mitochondrial RNA polymerase processivity. Regulates transcription of the mitochondrial genome, including genes important for the oxidative phosphorylation machinery. The chain is Transcription elongation factor, mitochondrial (TEFM) from Homo sapiens (Human).